Consider the following 153-residue polypeptide: Fimbrial protein EcpC (153 aa).

Positions 1-8 are cleaved as a propeptide — leader sequence; it reads MLKQVQKG. N-methylphenylalanine is present on Phe-9. The chain crosses the membrane as a helical span at residues 9–29; it reads FTLIELMIVIAIIGILAAIAL. A disulfide bond links Cys-130 and Cys-143.

This sequence belongs to the N-Me-Phe pilin family.

Its subcellular location is the fimbrium. It localises to the membrane. This chain is Fimbrial protein EcpC (ecpC), found in Eikenella corrodens.